Consider the following 514-residue polypeptide: uncharacterized protein (514 aa).

This is an uncharacterized protein from Caenorhabditis elegans.